Here is a 372-residue protein sequence, read N- to C-terminus: Aminodeoxyfutalosine synthase (372 aa).

Residues 53–292 (HKTYFVHSIR…VARLYLDNFP (240 aa)) enclose the Radical SAM core domain. The [4Fe-4S] cluster site is built by cysteine 69, cysteine 73, and cysteine 76.

Belongs to the radical SAM superfamily. MqnE family. The cofactor is [4Fe-4S] cluster.

It carries out the reaction 3-[(1-carboxyvinyl)-oxy]benzoate + S-adenosyl-L-methionine + H2O = 6-amino-6-deoxyfutalosine + hydrogencarbonate + L-methionine + H(+). Its pathway is quinol/quinone metabolism; menaquinone biosynthesis. Radical SAM enzyme that catalyzes the addition of the adenosyl radical to the double bond of 3-[(1-carboxyvinyl)oxy]benzoate, leading to aminodeoxyfutalosine (AFL), a key intermediate in the formation of menaquinone (MK, vitamin K2) from chorismate. The chain is Aminodeoxyfutalosine synthase from Thermus thermophilus (strain ATCC 27634 / DSM 579 / HB8).